We begin with the raw amino-acid sequence, 247 residues long: 3-deoxy-manno-octulosonate cytidylyltransferase (247 aa).

Belongs to the KdsB family.

It localises to the cytoplasm. It catalyses the reaction 3-deoxy-alpha-D-manno-oct-2-ulosonate + CTP = CMP-3-deoxy-beta-D-manno-octulosonate + diphosphate. It functions in the pathway nucleotide-sugar biosynthesis; CMP-3-deoxy-D-manno-octulosonate biosynthesis; CMP-3-deoxy-D-manno-octulosonate from 3-deoxy-D-manno-octulosonate and CTP: step 1/1. Its pathway is bacterial outer membrane biogenesis; lipopolysaccharide biosynthesis. Functionally, activates KDO (a required 8-carbon sugar) for incorporation into bacterial lipopolysaccharide in Gram-negative bacteria. The sequence is that of 3-deoxy-manno-octulosonate cytidylyltransferase from Methylobacterium nodulans (strain LMG 21967 / CNCM I-2342 / ORS 2060).